Consider the following 151-residue polypeptide: FAD synthase (151 aa).

ATP is bound by residues 21–22, 26–29, and aspartate 104; these read TF and HPGH.

It belongs to the archaeal FAD synthase family. As to quaternary structure, homodimer. A divalent metal cation is required as a cofactor.

The enzyme catalyses FMN + ATP + H(+) = FAD + diphosphate. The protein operates within cofactor biosynthesis; FAD biosynthesis; FAD from FMN: step 1/1. Its function is as follows. Catalyzes the transfer of the AMP portion of ATP to flavin mononucleotide (FMN) to produce flavin adenine dinucleotide (FAD) coenzyme. This Methanosarcina acetivorans (strain ATCC 35395 / DSM 2834 / JCM 12185 / C2A) protein is FAD synthase.